We begin with the raw amino-acid sequence, 106 residues long: Large ribosomal subunit protein uL24 (106 aa).

This sequence belongs to the universal ribosomal protein uL24 family. As to quaternary structure, part of the 50S ribosomal subunit.

Functionally, one of two assembly initiator proteins, it binds directly to the 5'-end of the 23S rRNA, where it nucleates assembly of the 50S subunit. Its function is as follows. One of the proteins that surrounds the polypeptide exit tunnel on the outside of the subunit. The polypeptide is Large ribosomal subunit protein uL24 (Acinetobacter baylyi (strain ATCC 33305 / BD413 / ADP1)).